Here is a 130-residue protein sequence, read N- to C-terminus: Small ribosomal subunit protein uS11 (130 aa).

Belongs to the universal ribosomal protein uS11 family. Part of the 30S ribosomal subunit. Interacts with proteins S7 and S18. Binds to IF-3.

Functionally, located on the platform of the 30S subunit, it bridges several disparate RNA helices of the 16S rRNA. Forms part of the Shine-Dalgarno cleft in the 70S ribosome. The protein is Small ribosomal subunit protein uS11 of Alteromonas mediterranea (strain DSM 17117 / CIP 110805 / LMG 28347 / Deep ecotype).